We begin with the raw amino-acid sequence, 350 residues long: Beta-ketodecanoyl-[acyl-carrier-protein] synthase (350 aa).

Cysteine 133 is a catalytic residue.

It belongs to the thiolase-like superfamily. Beta-ketoacyl-ACP synthases family.

The enzyme catalyses octanoyl-CoA + malonyl-[ACP] + H(+) = 3-oxodecanoyl-[ACP] + CO2 + CoA. It functions in the pathway lipid metabolism; fatty acid biosynthesis. Catalyzes the condensation of octanoyl-CoA, obtained from exogenously supplied fatty acids via beta-oxidation, with malonyl-[acyl-carrier protein], forming 3-oxodecanoyl-[acyl-carrier protein], an intermediate of the fatty acid elongation cycle that can then be extended to supply all of the cellular fatty acid needs. The enzyme thereby shunts fatty acid degradation intermediates from the beta-oxidation pathway into de novo fatty acid biosynthesis. The protein is Beta-ketodecanoyl-[acyl-carrier-protein] synthase of Pseudomonas aeruginosa (strain ATCC 15692 / DSM 22644 / CIP 104116 / JCM 14847 / LMG 12228 / 1C / PRS 101 / PAO1).